A 531-amino-acid polypeptide reads, in one-letter code: Probable protein phosphatase 2C 66 (531 aa).

The segment at 1-47 (MGSCLSSDLPPRAGAGAGASPGWPQRWRRRRQRGVERGGAVSGGGGG) is disordered. The span at 10–25 (PPRAGAGAGASPGWPQ) shows a compositional bias: low complexity. The 314-residue stretch at 88–401 (AACLHTQQGR…DDCAVVCLFL (314 aa)) folds into the PPM-type phosphatase domain. Residues Asp-123 and Gly-124 each contribute to the Mn(2+) site. Positions 151–172 (SANEDTSSHQNGSISGSVNSEE) are enriched in polar residues. Positions 151 to 176 (SANEDTSSHQNGSISGSVNSEESPVV) are disordered. Residues Asp-346 and Asp-392 each coordinate Mn(2+).

It belongs to the PP2C family. It depends on Mg(2+) as a cofactor. Mn(2+) is required as a cofactor.

The enzyme catalyses O-phospho-L-seryl-[protein] + H2O = L-seryl-[protein] + phosphate. The catalysed reaction is O-phospho-L-threonyl-[protein] + H2O = L-threonyl-[protein] + phosphate. This chain is Probable protein phosphatase 2C 66, found in Oryza sativa subsp. japonica (Rice).